A 211-amino-acid chain; its full sequence is 3-demethoxyubiquinol 3-hydroxylase (211 aa).

The interval 22-43 (KHPLNPNRKSPSANTVDGQLSD) is disordered. Residues 28 to 42 (NRKSPSANTVDGQLS) show a composition bias toward polar residues. 6 residues coordinate Fe cation: glutamate 60, glutamate 90, histidine 93, glutamate 142, glutamate 174, and histidine 177.

The protein belongs to the COQ7 family. The cofactor is Fe cation.

Its subcellular location is the cell membrane. The catalysed reaction is a 5-methoxy-2-methyl-3-(all-trans-polyprenyl)benzene-1,4-diol + AH2 + O2 = a 3-demethylubiquinol + A + H2O. It participates in cofactor biosynthesis; ubiquinone biosynthesis. Catalyzes the hydroxylation of 2-nonaprenyl-3-methyl-6-methoxy-1,4-benzoquinol during ubiquinone biosynthesis. In Francisella philomiragia subsp. philomiragia (strain ATCC 25017 / CCUG 19701 / FSC 153 / O#319-036), this protein is 3-demethoxyubiquinol 3-hydroxylase.